The following is a 409-amino-acid chain: Calsequestrin-2 (409 aa).

An N-terminal signal peptide occupies residues 1 to 19; it reads MKRAHLFVVGVYLLSSCRA. Tyr282 carries the phosphotyrosine modification. Asn335 carries an N-linked (GlcNAc...) asparagine glycan. The tract at residues 364–409 is disordered; that stretch reads DVLSGKINTEDDDNEDEDDDDDNDDDDDDNGNSDEEDNDDSDEDDE. Over residues 373–409 the composition is skewed to acidic residues; that stretch reads EDDDNEDEDDDDDNDDDDDDNGNSDEEDNDDSDEDDE.

This sequence belongs to the calsequestrin family. Monomer, homodimer and homooligomer. Mostly monomeric in the absence of calcium. Forms higher oligomers in a calcium-dependent manner. Dimers associate to form tetramers, that then form linear homomer chains. Interacts with ASPH and TRDN. Post-translationally, phosphorylation in the C-terminus, probably by CK2, moderately increases calcium buffering capacity. In terms of processing, N-glycosylated. Detected in heart muscle (at protein level).

The protein localises to the sarcoplasmic reticulum lumen. Calsequestrin is a high-capacity, moderate affinity, calcium-binding protein and thus acts as an internal calcium store in muscle. Calcium ions are bound by clusters of acidic residues at the protein surface, especially at the interface between subunits. Can bind around 60 Ca(2+) ions. Regulates the release of lumenal Ca(2+) via the calcium release channel RYR2; this plays an important role in triggering muscle contraction. Plays a role in excitation-contraction coupling in the heart and in regulating the rate of heart beats. This Oryctolagus cuniculus (Rabbit) protein is Calsequestrin-2 (CASQ2).